We begin with the raw amino-acid sequence, 179 residues long: Shikimate kinase (179 aa).

An ATP-binding site is contributed by glycine 12 to lysine 17. Serine 16 is a binding site for Mg(2+). 3 residues coordinate substrate: aspartate 34, arginine 61, and glycine 83. Arginine 131 provides a ligand contact to ATP. Arginine 147 serves as a coordination point for substrate.

The protein belongs to the shikimate kinase family. In terms of assembly, monomer. Mg(2+) is required as a cofactor.

It localises to the cytoplasm. The catalysed reaction is shikimate + ATP = 3-phosphoshikimate + ADP + H(+). Its pathway is metabolic intermediate biosynthesis; chorismate biosynthesis; chorismate from D-erythrose 4-phosphate and phosphoenolpyruvate: step 5/7. Catalyzes the specific phosphorylation of the 3-hydroxyl group of shikimic acid using ATP as a cosubstrate. The sequence is that of Shikimate kinase from Leptospira borgpetersenii serovar Hardjo-bovis (strain JB197).